The chain runs to 571 residues: Hemagglutinin-neuraminidase (571 aa).

Over methionine 1–arginine 26 the chain is Intravirion. A helical transmembrane segment spans residues isoleucine 27–serine 47. Over methionine 48–valine 571 the chain is Virion surface. N-linked (GlcNAc...) asparagine; by host glycosylation occurs at asparagine 119. An important for interaction with fusion/F protein region spans residues glycine 124 to tyrosine 152. Intrachain disulfides connect cysteine 172/cysteine 196, cysteine 186/cysteine 247, and cysteine 238/cysteine 251. Residues asparagine 234–serine 239 are involved in neuraminidase activity. The N-linked (GlcNAc...) asparagine; by host glycan is linked to asparagine 341. Cysteine 455 and cysteine 465 are disulfide-bonded. N-linked (GlcNAc...) asparagine; by host glycosylation is found at asparagine 481 and asparagine 508. Cysteine 531 and cysteine 542 form a disulfide bridge.

It belongs to the paramyxoviruses hemagglutinin-neuraminidase family. Homotetramer; composed of disulfide-linked homodimers. Interacts with F protein trimer. Interacts with host CG-1B; this interaction inhibits viral adsorption and replication rather than internalization.

It is found in the virion membrane. The protein localises to the host cell membrane. It catalyses the reaction Hydrolysis of alpha-(2-&gt;3)-, alpha-(2-&gt;6)-, alpha-(2-&gt;8)- glycosidic linkages of terminal sialic acid residues in oligosaccharides, glycoproteins, glycolipids, colominic acid and synthetic substrates.. Mediates the viral entry into the host cell together with fusion/F protein. Attaches the virus to sialic acid-containing cell receptors and thereby initiates infection. Binding of HN protein to the receptor induces a conformational change that allows the F protein to trigger virion/cell membranes fusion. Functionally, neuraminidase activity ensures the efficient spread of the virus by dissociating the mature virions from the neuraminic acid containing glycoproteins. The protein is Hemagglutinin-neuraminidase (HN) of Newcastle disease virus (strain Iba/85) (NDV).